Here is a 272-residue protein sequence, read N- to C-terminus: MDHRTPTPDNPWLALRNLTPARIALGRTGTSLPTGAQLDFQFAHAQARDAVHLAFDHAGLASQLSDRGRESLVLHSAASDRHQYLQRPDLGRRLNEDSIATLRQHAQANPGGVDLAIVVADGLSALAVHRHTLPFLTRFDEQAAADGWTCAPVVLVQQGRVAVADEVGELLGARMTVMLIGERPGLSSPDSLGLYFTYAPKVGLTDAYRNCISNIRLEGLSYGMAAHRLLYLMREACRRQLSGVNLKDEAEVHSLENEDSANQKGNFLLGKG.

3 residues coordinate adenosylcob(III)alamin: valine 161, glutamate 182, and cysteine 211.

It belongs to the EutC family. In terms of assembly, the basic unit is a heterodimer which dimerizes to form tetramers. The heterotetramers trimerize; 6 large subunits form a core ring with 6 small subunits projecting outwards. Adenosylcob(III)alamin serves as cofactor.

The protein localises to the bacterial microcompartment. The enzyme catalyses ethanolamine = acetaldehyde + NH4(+). Its pathway is amine and polyamine degradation; ethanolamine degradation. Its function is as follows. Catalyzes the deamination of various vicinal amino-alcohols to oxo compounds. Allows this organism to utilize ethanolamine as the sole source of nitrogen and carbon in the presence of external vitamin B12. This is Ethanolamine ammonia-lyase small subunit from Pseudomonas putida (strain ATCC 47054 / DSM 6125 / CFBP 8728 / NCIMB 11950 / KT2440).